The sequence spans 248 residues: AA9 family lytic polysaccharide monooxygenase G (248 aa).

Residues 1 to 21 form the signal peptide; it reads MLPNAAGLLVAGVVSLSGVAA. H22 lines the Cu(2+) pocket. An N-linked (GlcNAc...) asparagine glycan is attached at N58. C77 and C195 are oxidised to a cystine. H107 serves as a coordination point for Cu(2+). Q190 lines the O2 pocket. Y192 lines the Cu(2+) pocket. N-linked (GlcNAc...) asparagine glycosylation occurs at N203.

This sequence belongs to the polysaccharide monooxygenase AA9 family. Cu(2+) serves as cofactor.

It is found in the secreted. It catalyses the reaction [(1-&gt;4)-beta-D-glucosyl]n+m + reduced acceptor + O2 = 4-dehydro-beta-D-glucosyl-[(1-&gt;4)-beta-D-glucosyl]n-1 + [(1-&gt;4)-beta-D-glucosyl]m + acceptor + H2O.. In terms of biological role, lytic polysaccharide monooxygenase (LPMO) that depolymerizes crystalline and amorphous polysaccharides via the oxidation of scissile alpha- or beta-(1-4)-glycosidic bonds, yielding C1 or C4 oxidation products. Catalysis by LPMOs requires the reduction of the active-site copper from Cu(II) to Cu(I) by a reducing agent and H(2)O(2) or O(2) as a cosubstrate. The protein is AA9 family lytic polysaccharide monooxygenase G of Malbranchea cinnamomea (Thermophilic fungus).